We begin with the raw amino-acid sequence, 194 residues long: Probable RNA polymerase sigma factor HI_1459 (194 aa).

The Polymerase core binding motif lies at 45 to 58 (DLVQEAFLSAFKNL). Positions 161–180 (SEEICQETHLTSSNLHTTLY) form a DNA-binding region, H-T-H motif.

This sequence belongs to the sigma-70 factor family. ECF subfamily.

The polypeptide is Probable RNA polymerase sigma factor HI_1459 (Haemophilus influenzae (strain ATCC 51907 / DSM 11121 / KW20 / Rd)).